Consider the following 260-residue polypeptide: Putative ABC transporter substrate-binding lipoprotein YvgL (260 aa).

The N-terminal stretch at 1–20 is a signal peptide; that stretch reads MFKKYSIFIAALTAFLLVAG. Cys-21 carries N-palmitoyl cysteine lipidation. The S-diacylglycerol cysteine moiety is linked to residue Cys-21. Molybdate-binding residues include Ser-43, Ser-71, Ala-151, Val-178, and Tyr-196.

Belongs to the bacterial solute-binding protein ModA family.

It localises to the cell membrane. The polypeptide is Putative ABC transporter substrate-binding lipoprotein YvgL (yvgL) (Bacillus subtilis (strain 168)).